Consider the following 492-residue polypeptide: Ketol-acid reductoisomerase (NADP(+)) (492 aa).

Residues 14-208 (LDQLGKCRFM…GGHRAGVLQS (195 aa)) enclose the KARI N-terminal Rossmann domain. NADP(+)-binding positions include 45-48 (CGAQ), Arg-68, Arg-76, Ser-78, and 108-110 (DKQ). His-132 is an active-site residue. Residue Gly-158 coordinates NADP(+). 2 KARI C-terminal knotted domains span residues 209–344 (SFVA…NAPQ) and 345–485 (FDGK…MKDM). Mg(2+) contacts are provided by Asp-217, Glu-221, Glu-389, and Glu-393. A substrate-binding site is contributed by Ser-414.

The protein belongs to the ketol-acid reductoisomerase family. Requires Mg(2+) as cofactor.

It catalyses the reaction (2R)-2,3-dihydroxy-3-methylbutanoate + NADP(+) = (2S)-2-acetolactate + NADPH + H(+). The enzyme catalyses (2R,3R)-2,3-dihydroxy-3-methylpentanoate + NADP(+) = (S)-2-ethyl-2-hydroxy-3-oxobutanoate + NADPH + H(+). It functions in the pathway amino-acid biosynthesis; L-isoleucine biosynthesis; L-isoleucine from 2-oxobutanoate: step 2/4. Its pathway is amino-acid biosynthesis; L-valine biosynthesis; L-valine from pyruvate: step 2/4. Involved in the biosynthesis of branched-chain amino acids (BCAA). Catalyzes an alkyl-migration followed by a ketol-acid reduction of (S)-2-acetolactate (S2AL) to yield (R)-2,3-dihydroxy-isovalerate. In the isomerase reaction, S2AL is rearranged via a Mg-dependent methyl migration to produce 3-hydroxy-3-methyl-2-ketobutyrate (HMKB). In the reductase reaction, this 2-ketoacid undergoes a metal-dependent reduction by NADPH to yield (R)-2,3-dihydroxy-isovalerate. The sequence is that of Ketol-acid reductoisomerase (NADP(+)) from Pectobacterium carotovorum subsp. carotovorum (strain PC1).